Reading from the N-terminus, the 122-residue chain is Ribosome-binding factor A (122 aa).

The protein belongs to the RbfA family. In terms of assembly, monomer. Binds 30S ribosomal subunits, but not 50S ribosomal subunits or 70S ribosomes.

It is found in the cytoplasm. Its function is as follows. One of several proteins that assist in the late maturation steps of the functional core of the 30S ribosomal subunit. Associates with free 30S ribosomal subunits (but not with 30S subunits that are part of 70S ribosomes or polysomes). Required for efficient processing of 16S rRNA. May interact with the 5'-terminal helix region of 16S rRNA. In Prosthecochloris aestuarii (strain DSM 271 / SK 413), this protein is Ribosome-binding factor A.